The sequence spans 182 residues: Putative pre-16S rRNA nuclease (182 aa).

The protein belongs to the YqgF nuclease family.

The protein localises to the cytoplasm. Could be a nuclease involved in processing of the 5'-end of pre-16S rRNA. The sequence is that of Putative pre-16S rRNA nuclease from Corynebacterium aurimucosum (strain ATCC 700975 / DSM 44827 / CIP 107346 / CN-1) (Corynebacterium nigricans).